The sequence spans 450 residues: Phosphoglucosamine mutase 2 (450 aa).

Ser101 functions as the Phosphoserine intermediate in the catalytic mechanism. 4 residues coordinate Mg(2+): Ser101, Asp245, Asp247, and Asp249. The residue at position 101 (Ser101) is a Phosphoserine.

Belongs to the phosphohexose mutase family. Mg(2+) serves as cofactor. Activated by phosphorylation.

It carries out the reaction alpha-D-glucosamine 1-phosphate = D-glucosamine 6-phosphate. Functionally, catalyzes the conversion of glucosamine-6-phosphate to glucosamine-1-phosphate. This chain is Phosphoglucosamine mutase 2, found in Shewanella sp. (strain MR-4).